The following is a 186-amino-acid chain: Tumor necrosis factor alpha-induced protein 8-like protein 1 (186 aa).

Positions 37 to 70 (EVLDELYRVTKEYTRNRKEAQKIIKNLIKMVVKL) form a coiled coil.

It belongs to the TNFAIP8 family.

The protein resides in the cytoplasm. This Danio rerio (Zebrafish) protein is Tumor necrosis factor alpha-induced protein 8-like protein 1 (tnfaip8l1).